Reading from the N-terminus, the 131-residue chain is Small ribosomal subunit protein uS11 (131 aa).

The protein belongs to the universal ribosomal protein uS11 family. In terms of assembly, part of the 30S ribosomal subunit. Interacts with proteins S7 and S18. Binds to IF-3.

Functionally, located on the platform of the 30S subunit, it bridges several disparate RNA helices of the 16S rRNA. Forms part of the Shine-Dalgarno cleft in the 70S ribosome. This Trichormus variabilis (strain ATCC 29413 / PCC 7937) (Anabaena variabilis) protein is Small ribosomal subunit protein uS11.